The sequence spans 246 residues: Probable transcriptional regulatory protein Pden_1905 (246 aa).

The tract at residues 1–21 (MAGHSKWANIQHRKGKQDKLR) is disordered.

The protein belongs to the TACO1 family.

The protein resides in the cytoplasm. The protein is Probable transcriptional regulatory protein Pden_1905 of Paracoccus denitrificans (strain Pd 1222).